Consider the following 47-residue polypeptide: IIECFFSCEIEKDGKSKEGKPCKPKGDKDKDKKCGGWRCKIKMCIKI.

3 cysteine pairs are disulfide-bonded: Cys-4–Cys-34, Cys-8–Cys-39, and Cys-22–Cys-44.

Post-translationally, contains 3 disulfide bonds. Expressed by the venom gland.

It localises to the secreted. Its function is as follows. Is toxic to insects. Reduces amplitude and frequency of spontaneous firing and inhibits voltage-gated sodium current (Nav) in the dorsal unpaired median (DUM) neurons of P.americana. This Acanthoscurria natalensis (Tarantula spider) protein is Mu-theraphotoxin-An1a.